The primary structure comprises 246 residues: MSILVTRPSPAGEELVSRLRTLGQVAWHFPLIEFSPGQQLPQLADQLAALGESDLLFALSQHAVAFAQSQLHQQDRKWPRLPDYFAIGRTTALALHTVSGQKILYPQDREISEVLLQLPELQNIAGKRALILRGNGGRELIGDTLTARGAEVTFCECYQRCAIHYDGAEEAMRWQAREVTMVVVTSGEMLQQLWSLIPQWYREHWLLHCRLLVVSERLAKLARELGWQDIKVADNADNDALLRALQ.

Belongs to the uroporphyrinogen-III synthase family. Monomer.

It catalyses the reaction hydroxymethylbilane = uroporphyrinogen III + H2O. The protein operates within porphyrin-containing compound metabolism; protoporphyrin-IX biosynthesis; coproporphyrinogen-III from 5-aminolevulinate: step 3/4. Its function is as follows. Catalyzes cyclization of the linear tetrapyrrole, hydroxymethylbilane, to the macrocyclic uroporphyrinogen III. This chain is Uroporphyrinogen-III synthase (hemD), found in Escherichia coli (strain K12).